The following is a 297-amino-acid chain: MDFLINKKLKIFITLMETGSFSIATSVLYITRTPLSRVISDLERELKQRLFIRKNGTLIPTEFAQTIYRKVKSHYIFLHALEQEIGPTGKTKQLEIIFDEIYPGSLKNLIISALTISGQKTNIMGRAVNSQIIEELCQTNNCIVISARNYFHRESLVCRTSVEGGVMLFIPKKFFLCGKPDINRLAGTPVLFHEGAKNFNLDTIYHFFEQTLGITNPAFSFDNVDLFSSLYRLQQGLAMLLIPVRVCRALGLSTDHALHIKGVALCTSLYYPTKKRETPDYRKAIKLIQQELKQSTF.

An HTH lysR-type domain is found at 1–61 (MDFLINKKLK…IRKNGTLIPT (61 aa)). A DNA-binding region (H-T-H motif) is located at residues 21–40 (FSIATSVLYITRTPLSRVIS).

This sequence belongs to the LysR transcriptional regulatory family.

Its subcellular location is the cytoplasm. In terms of biological role, positive regulator for the plasmid-encoded virulence factors SpvA, SpvB, and SpvC. The polypeptide is Virulence genes transcriptional activator (mkaC) (Salmonella typhimurium (strain LT2 / SGSC1412 / ATCC 700720)).